Reading from the N-terminus, the 310-residue chain is uncharacterized protein (310 aa).

Residues 269–307 are a coiled coil; it reads DLAELERKKSLAEIHKKAAMAKKREEKKKIKQELKKSAK. A compositionally biased stretch (basic and acidic residues) spans 290 to 304; that stretch reads KKREEKKKIKQELKK. Residues 290–310 are disordered; the sequence is KKREEKKKIKQELKKSAKGKK.

This is an uncharacterized protein from Magallana gigas (Pacific oyster).